The chain runs to 148 residues: Macrodomain Ter protein (148 aa).

This sequence belongs to the MatP family. Homodimer.

It localises to the cytoplasm. Its function is as follows. Required for spatial organization of the terminus region of the chromosome (Ter macrodomain) during the cell cycle. Prevents early segregation of duplicated Ter macrodomains during cell division. Binds specifically to matS, which is a 13 bp signature motif repeated within the Ter macrodomain. This chain is Macrodomain Ter protein, found in Aliivibrio salmonicida (strain LFI1238) (Vibrio salmonicida (strain LFI1238)).